The primary structure comprises 142 residues: MVLSPADKSNVKAAWGKVGGHAGEYGAEALERMFLSFPTTKTYFPHFDLSHGSAQVKGHGKKVADALTLAVGHVDDMPNALSALSDLHAHKLRVDPVNFKLLSHCLLVTLAAHLPAEFTPAVHASLDKFLASVSTVLTSKYR.

The 141-residue stretch at 2-142 (VLSPADKSNV…VSTVLTSKYR (141 aa)) folds into the Globin domain. Serine 4 is modified (phosphoserine). Residues lysine 8 and lysine 12 each carry the N6-succinyllysine modification. Lysine 17 carries the N6-acetyllysine; alternate modification. Lysine 17 bears the N6-succinyllysine; alternate mark. A Phosphotyrosine modification is found at tyrosine 25. Serine 36 is subject to Phosphoserine. Lysine 41 bears the N6-succinyllysine mark. Phosphoserine is present on serine 50. Histidine 59 is a binding site for O2. Position 88 (histidine 88) interacts with heme b. A Phosphoserine modification is found at serine 103. A Phosphothreonine modification is found at threonine 109. Phosphoserine is present on residues serine 125 and serine 132. 2 positions are modified to phosphothreonine: threonine 135 and threonine 138. Serine 139 is subject to Phosphoserine.

It belongs to the globin family. In terms of assembly, heterotetramer of two alpha chains and two beta chains. As to expression, red blood cells.

Its function is as follows. Involved in oxygen transport from the lung to the various peripheral tissues. Functionally, hemopressin acts as an antagonist peptide of the cannabinoid receptor CNR1. Hemopressin-binding efficiently blocks cannabinoid receptor CNR1 and subsequent signaling. This is Hemoglobin subunit alpha (HBA) from Macaca fuscata fuscata (Japanese macaque).